The following is a 299-amino-acid chain: tRNA uridine(34) hydroxylase (299 aa).

The Rhodanese domain occupies 132–226 (AGRPVVMLDT…YFEEVGGAHY (95 aa)). Catalysis depends on Cys-186, which acts as the Cysteine persulfide intermediate.

It belongs to the TrhO family.

It carries out the reaction uridine(34) in tRNA + AH2 + O2 = 5-hydroxyuridine(34) in tRNA + A + H2O. Functionally, catalyzes oxygen-dependent 5-hydroxyuridine (ho5U) modification at position 34 in tRNAs. The polypeptide is tRNA uridine(34) hydroxylase (Burkholderia pseudomallei (strain 1106a)).